A 211-amino-acid polypeptide reads, in one-letter code: Neuroendocrine protein 7B2 (211 aa).

The signal sequence occupies residues 1-26 (MVSRMVSTMLSGLLFWLASGWTPAFA). A disordered region spans residues 106–132 (DFSEDQGYPDPPNPCPVGKTDDGCLEN). A disulfide bridge links Cys-120 with Cys-129. Phosphoserine is present on residues Ser-140 and Ser-204. Residues 173-211 (GGERRKRRSVNPYLQGQRLDNVVAKKSVPHFSDEDKDPE) form a disordered region.

This sequence belongs to the 7B2 family. As to quaternary structure, interacts with PCSK2/PC2 early in the secretory pathway. Dissociation occurs at later stages. In terms of processing, proteolytically cleaved in the Golgi by a furin-like convertase to generate bioactive peptides. Sulfated on tyrosine residues.

The protein resides in the secreted. In terms of biological role, acts as a molecular chaperone for PCSK2/PC2, preventing its premature activation in the regulated secretory pathway. Binds to inactive PCSK2 in the endoplasmic reticulum and facilitates its transport from there to later compartments of the secretory pathway where it is proteolytically matured and activated. Also required for cleavage of PCSK2 but does not appear to be involved in its folding. Plays a role in regulating pituitary hormone secretion. The C-terminal peptide inhibits PCSK2 in vitro. This chain is Neuroendocrine protein 7B2 (SCG5), found in Pan troglodytes (Chimpanzee).